Here is a 374-residue protein sequence, read N- to C-terminus: DNA integrity scanning protein DisA (374 aa).

The DAC domain maps to 20–158 (DGLMRASLSA…DGQRRVLEDS (139 aa)). Residues glycine 87, leucine 105, and 118–122 (TRHRT) each bind ATP.

Belongs to the DisA family. Homooctamer. Interacts with RadA. Mg(2+) serves as cofactor.

The catalysed reaction is 2 ATP = 3',3'-c-di-AMP + 2 diphosphate. Diadenylate cyclase activity is inhibited by the interaction with RadA. Participates in a DNA-damage check-point that is active prior to asymmetric division when DNA is damaged. DisA forms globular foci that rapidly scan along the chromosomes during sporulation, searching for lesions. When a lesion is present, DisA pauses at the lesion site. This triggers a cellular response that culminates in a temporary block in sporulation initiation. Functionally, also has diadenylate cyclase activity, catalyzing the condensation of 2 ATP molecules into cyclic di-AMP (c-di-AMP). c-di-AMP acts as a signaling molecule that couples DNA integrity with progression of sporulation. The rise in c-di-AMP level generated by DisA while scanning the chromosome, operates as a positive signal that advances sporulation; upon encountering a lesion, the DisA focus arrests at the damaged site and halts c-di-AMP synthesis. The polypeptide is DNA integrity scanning protein DisA (Streptomyces coelicolor (strain ATCC BAA-471 / A3(2) / M145)).